Consider the following 279-residue polypeptide: Movement protein (279 aa).

A disordered region spans residues 246–279 (SESEELNVESPPAAIGSSSASRSEAFRPQVVNGL). The segment covering 254–268 (ESPPAAIGSSSASRS) has biased composition (low complexity).

The protein belongs to the cucumovirus movement protein family.

The protein resides in the host cell junction. It is found in the host plasmodesma. Functionally, transports viral genome to neighboring plant cells directly through plasmosdesmata, without any budding. The movement protein allows efficient cell to cell propagation, by bypassing the host cell wall barrier. Acts by forming a tubular structure at the host plasmodesmata, enlarging it enough to allow free passage of virion capsids. The protein is Movement protein of Cucumber mosaic virus (strain CS) (CMV).